The following is a 625-amino-acid chain: tRNA uridine 5-carboxymethylaminomethyl modification enzyme MnmG (625 aa).

Residues 13-18, V125, and S182 each bind FAD; that span reads GGGHAG. Position 276-290 (276-290) interacts with NAD(+); that stretch reads GPRYCPSIEDKITRF. Position 373 (Q373) interacts with FAD.

The protein belongs to the MnmG family. In terms of assembly, homodimer. Heterotetramer of two MnmE and two MnmG subunits. FAD is required as a cofactor.

The protein localises to the cytoplasm. In terms of biological role, NAD-binding protein involved in the addition of a carboxymethylaminomethyl (cmnm) group at the wobble position (U34) of certain tRNAs, forming tRNA-cmnm(5)s(2)U34. This is tRNA uridine 5-carboxymethylaminomethyl modification enzyme MnmG from Lactococcus lactis subsp. cremoris (strain SK11).